A 511-amino-acid polypeptide reads, in one-letter code: MNNELILVLDFGGQYNQLIARRVREANVYCEVLPYNSSIDKIKSKNPKGIIFTGGPASVLDPKAPICDREVFELGIPILGICYGMQLMSHMLGGTVEKAEQREYGKVNITFDTSSMLFEGIEKESTCWMSHTYYVNNLPEGFVKCADTPNCPVAAIENREKKLYGVQFHPEVVHTPKGRDILNNFLYKICGCSGDWKMASFIEHSINSIREKVGDKKVLCALSGGVDSSVAAVLVHKAVGKQLTCIFVDHGLLRKYEGDQVEEVFKKQFDISLIRVNAEDRFLEKLKGVTDPERKRKIIGEEFIRVFEEEAKKIGTVDFLVQGTIYPDVIESGVGDAAVIKSHHNVGGLPDYIDFKEIIEPLRSLFKDEVRKVGIELGIPEDIVMRQPFPGPGLAVRVIGEVTKEKVDILRDADYIFREEIKNAGLDREINQYFAVLTGMRSVGVMGDERTYDYTLALRAVTTIDFMTADWAKIPYDVLEKVSNRIVNEVKHINRIVYDITTKPPATIEWE.

One can recognise a Glutamine amidotransferase type-1 domain in the interval 5–195 (LILVLDFGGQ…LYKICGCSGD (191 aa)). C82 functions as the Nucleophile in the catalytic mechanism. Residues H169 and E171 contribute to the active site. In terms of domain architecture, GMPS ATP-PPase spans 196–386 (WKMASFIEHS…LGIPEDIVMR (191 aa)). Position 223–229 (223–229 (SGGVDSS)) interacts with ATP.

In terms of assembly, homodimer.

The enzyme catalyses XMP + L-glutamine + ATP + H2O = GMP + L-glutamate + AMP + diphosphate + 2 H(+). The protein operates within purine metabolism; GMP biosynthesis; GMP from XMP (L-Gln route): step 1/1. Functionally, catalyzes the synthesis of GMP from XMP. The polypeptide is GMP synthase [glutamine-hydrolyzing] (Acetivibrio thermocellus (strain ATCC 27405 / DSM 1237 / JCM 9322 / NBRC 103400 / NCIMB 10682 / NRRL B-4536 / VPI 7372) (Clostridium thermocellum)).